The chain runs to 456 residues: MDCAEEKAKSLRRQIADTEAELAQLKLQLLSLEEKDTNSKNLEAKTSASEKDDPVTHIENKWPMSLEEYKRYGRQMIVPDIGIKGQLRLKSASILLVGAGGLGCPAAAYIAGAGVGTIGIVDGDIVEESNLHRQILHSTDRVGVNKAGIVKDYDIVLDCTDHPTSRYLISDICVLLQKPLVSASALRTDGQLIVLNNPALPPGDLSGGSCYRCVFPKPPPPEAVTSCGDGGIIGPVVGVMGVLQALEAIKLIASGKLAAVGENDNTSPTPKMNPTTMLLFSTNGSTPFRNVRLKGRRSNCFACGEEAQLALEQMSSGSMDYVLFCGMTHPVKLLSDEERIEARDYDSIRKEKEHLLIDVREKVQFDICNIEGSYNIPFSSFQGSKGSSDHPLSTLTENLNPKTPIYVVCRLGNDSQIVTKKMKDLGLDQKGDRYIGDIKGGLRSWKEQVDGSWPEY.

ATP-binding positions include Gly101, Asp122, 129-133 (SNLHR), Lys146, and 161-162 (DH). Cys210 and Cys213 together coordinate Zn(2+). The active-site Glycyl thioester intermediate; for adenylyltransferase activity is Cys227. Cys300 and Cys303 together coordinate Zn(2+). In terms of domain architecture, Rhodanese spans 350–454 (KEKEHLLIDV…WKEQVDGSWP (105 aa)). Cys409 serves as the catalytic Cysteine persulfide intermediate; for sulfurtransferase activity.

The protein in the N-terminal section; belongs to the HesA/MoeB/ThiF family. UBA4 subfamily. Requires Zn(2+) as cofactor.

Its subcellular location is the cytoplasm. It is found in the cytosol. The catalysed reaction is [molybdopterin-synthase sulfur-carrier protein]-C-terminal Gly-Gly + ATP + H(+) = [molybdopterin-synthase sulfur-carrier protein]-C-terminal Gly-Gly-AMP + diphosphate. The enzyme catalyses [molybdopterin-synthase sulfur-carrier protein]-C-terminal Gly-Gly-AMP + S-sulfanyl-L-cysteinyl-[cysteine desulfurase] + AH2 = [molybdopterin-synthase sulfur-carrier protein]-C-terminal-Gly-aminoethanethioate + L-cysteinyl-[cysteine desulfurase] + A + AMP + 2 H(+). It participates in tRNA modification; 5-methoxycarbonylmethyl-2-thiouridine-tRNA biosynthesis. Its function is as follows. Plays a central role in 2-thiolation of mcm(5)S(2)U at tRNA wobble positions of cytosolic tRNA(Lys), tRNA(Glu) and tRNA(Gln). Also essential during biosynthesis of the molybdenum cofactor. Acts by mediating the C-terminal thiocarboxylation of sulfur carriers urm1 and mocs2a. Its N-terminus first activates urm1 and mocs2a as acyl-adenylates (-COAMP), then the persulfide sulfur on the catalytic cysteine is transferred to urm1 and mocs2a to form thiocarboxylation (-COSH) of their C-terminus. The reaction probably involves hydrogen sulfide that is generated from the persulfide intermediate and that acts as a nucleophile towards urm1 and mocs2a. Subsequently, a transient disulfide bond is formed. Does not use thiosulfate as sulfur donor; nfs1 probably acting as a sulfur donor for thiocarboxylation reactions. The chain is Adenylyltransferase and sulfurtransferase uba4 from Sclerotinia sclerotiorum (strain ATCC 18683 / 1980 / Ss-1) (White mold).